Consider the following 1138-residue polypeptide: Pesticidal crystal protein Cry7Aa (1138 aa).

This sequence belongs to the delta endotoxin family.

Its function is as follows. Promotes colloidosmotic lysis by binding to the midgut epithelial cells of Coleoptera. This protein is not toxic in its natural form. It is highly toxic to Colorado potato beetle larvae after an in vitro solubilization and trypsin activation step. This Bacillus thuringiensis protein is Pesticidal crystal protein Cry7Aa (cry7Aa).